The sequence spans 448 residues: Cytoplasmic tRNA 2-thiolation protein 2 (448 aa).

Belongs to the CTU2/NCS2 family.

Its subcellular location is the cytoplasm. The protein operates within tRNA modification; 5-methoxycarbonylmethyl-2-thiouridine-tRNA biosynthesis. In terms of biological role, plays a central role in 2-thiolation of mcm(5)S(2)U at tRNA wobble positions of tRNA(Lys), tRNA(Glu) and tRNA(Gln). May act by forming a heterodimer with NCS6 that ligates sulfur from thiocarboxylated URM1 onto the uridine of tRNAs at wobble position. Prior mcm(5) tRNA modification by the elongator complex is required for 2-thiolation. May also be involved in protein urmylation. The protein is Cytoplasmic tRNA 2-thiolation protein 2 of Lodderomyces elongisporus (strain ATCC 11503 / CBS 2605 / JCM 1781 / NBRC 1676 / NRRL YB-4239) (Yeast).